The chain runs to 225 residues: MKAFIVRVLLIFIGAILLIQLWIFSSLVWWRTHEVDTTMFMRIDYWSDPSEPIIHEWLDYDDISDNFKHAILAGEDAKFIHHHGFDWDGIRFALERNNEEGEVVAGGSTVSQQLAKNLFLYNKRSFIRKGQETVATWMMERMWSKRRILEVYMNSVEFGKNLYGVEAAAQYYYGKSAKSLTREQAAFLAALLPDPKYYQDHRNDRKLQYRKRVILRYMNSTQIPE.

A helical membrane pass occupies residues 8–28; that stretch reads VLLIFIGAILLIQLWIFSSLV.

It belongs to the glycosyltransferase 51 family.

It is found in the cell inner membrane. The enzyme catalyses [GlcNAc-(1-&gt;4)-Mur2Ac(oyl-L-Ala-gamma-D-Glu-L-Lys-D-Ala-D-Ala)](n)-di-trans,octa-cis-undecaprenyl diphosphate + beta-D-GlcNAc-(1-&gt;4)-Mur2Ac(oyl-L-Ala-gamma-D-Glu-L-Lys-D-Ala-D-Ala)-di-trans,octa-cis-undecaprenyl diphosphate = [GlcNAc-(1-&gt;4)-Mur2Ac(oyl-L-Ala-gamma-D-Glu-L-Lys-D-Ala-D-Ala)](n+1)-di-trans,octa-cis-undecaprenyl diphosphate + di-trans,octa-cis-undecaprenyl diphosphate + H(+). It participates in cell wall biogenesis; peptidoglycan biosynthesis. Peptidoglycan polymerase that catalyzes glycan chain elongation from lipid-linked precursors. The sequence is that of Biosynthetic peptidoglycan transglycosylase from Acinetobacter baumannii (strain AB307-0294).